Here is an 844-residue protein sequence, read N- to C-terminus: Penicillin-binding protein 1B (844 aa).

Residues 1–10 (MAGNDREPIG) are compositionally biased toward basic and acidic residues. Residues 1-60 (MAGNDREPIGRKGKPTRPVKQKVSRRRYEDDDDYDDYDDYEDEEPMPRKGKGKGKGRKPR) are disordered. The Cytoplasmic portion of the chain corresponds to 1–63 (MAGNDREPIG…GKGRKPRGKR (63 aa)). Residues 11–25 (RKGKPTRPVKQKVSR) show a composition bias toward basic residues. A compositionally biased stretch (acidic residues) spans 30 to 44 (DDDDYDDYDDYEDEE). Basic residues predominate over residues 48-60 (RKGKGKGKGRKPR). Residues 64–87 (GWLWLLLKLAIVFAVLIAIYGVYL) form a helical; Signal-anchor for type II membrane protein membrane-spanning segment. A membrane association region spans residues 88–250 (DQKIRSRIDG…DGISLYSIGR (163 aa)). Residues 88–844 (DQKIRSRIDG…GWIKDMFGSN (757 aa)) lie on the Periplasmic side of the membrane. Positions 109–200 (RMVNLEPDMT…QFGFFRLDPR (92 aa)) are uvrB domain 2 homolog. Positions 195–367 (FRLDPRLITM…SIYNPWRNPK (173 aa)) are transglycosylase. Glutamate 233 functions as the Proton donor; for transglycosylase activity in the catalytic mechanism. Positions 444-736 (SVAQDAAEKA…NNQPTKLYGA (293 aa)) are transpeptidase. Serine 510 functions as the Acyl-ester intermediate; for transpeptidase activity in the catalytic mechanism. Positions 793-825 (LCQQSEMQQQPSGNPFDQSSQPQQQPQQQPAQQ) are enriched in low complexity. The segment at 793-835 (LCQQSEMQQQPSGNPFDQSSQPQQQPQQQPAQQEQKDSDGVAG) is disordered.

In the N-terminal section; belongs to the glycosyltransferase 51 family. The protein in the C-terminal section; belongs to the transpeptidase family. As to quaternary structure, forms a trimeric complex with MipA and MltA. Has also been shown to exist as monomer or homodimer; homodimer of Alpha and Gamma isozymes can be found. Interacts with UvrA, FtsL and FtsN.

It localises to the cell inner membrane. It catalyses the reaction [GlcNAc-(1-&gt;4)-Mur2Ac(oyl-L-Ala-gamma-D-Glu-L-Lys-D-Ala-D-Ala)](n)-di-trans,octa-cis-undecaprenyl diphosphate + beta-D-GlcNAc-(1-&gt;4)-Mur2Ac(oyl-L-Ala-gamma-D-Glu-L-Lys-D-Ala-D-Ala)-di-trans,octa-cis-undecaprenyl diphosphate = [GlcNAc-(1-&gt;4)-Mur2Ac(oyl-L-Ala-gamma-D-Glu-L-Lys-D-Ala-D-Ala)](n+1)-di-trans,octa-cis-undecaprenyl diphosphate + di-trans,octa-cis-undecaprenyl diphosphate + H(+). It carries out the reaction Preferential cleavage: (Ac)2-L-Lys-D-Ala-|-D-Ala. Also transpeptidation of peptidyl-alanyl moieties that are N-acyl substituents of D-alanine.. Its pathway is cell wall biogenesis; peptidoglycan biosynthesis. Functionally, cell wall formation. Synthesis of cross-linked peptidoglycan from the lipid intermediates. The enzyme has a penicillin-insensitive transglycosylase N-terminal domain (formation of linear glycan strands) and a penicillin-sensitive transpeptidase C-terminal domain (cross-linking of the peptide subunits). The polypeptide is Penicillin-binding protein 1B (mrcB) (Escherichia coli (strain K12)).